Consider the following 466-residue polypeptide: Asparagine--tRNA ligase (466 aa).

It belongs to the class-II aminoacyl-tRNA synthetase family. In terms of assembly, homodimer.

It is found in the cytoplasm. The catalysed reaction is tRNA(Asn) + L-asparagine + ATP = L-asparaginyl-tRNA(Asn) + AMP + diphosphate + H(+). This chain is Asparagine--tRNA ligase, found in Shewanella halifaxensis (strain HAW-EB4).